Consider the following 60-residue polypeptide: Large ribosomal subunit protein bL32 (60 aa).

The segment at 1–21 (MAVPARHTSKAKKNKRRTHYK) is disordered. Basic residues predominate over residues 7-20 (HTSKAKKNKRRTHY).

Belongs to the bacterial ribosomal protein bL32 family.

This chain is Large ribosomal subunit protein bL32, found in Streptococcus uberis (strain ATCC BAA-854 / 0140J).